A 620-amino-acid chain; its full sequence is Probable potassium transport system protein Kup (620 aa).

12 helical membrane passes run 11 to 31, 51 to 71, 100 to 120, 138 to 158, 167 to 187, 202 to 222, 246 to 266, 288 to 308, 334 to 354, 364 to 384, 396 to 416, and 418 to 438; these read LAFL…LYAF, ILSL…LLLV, IAML…VITP, LAPY…AVQA, FFAP…AHAI, AVHF…LVVL, WFAL…AYLL, LILL…SGIF, GQIY…FVML, AAYG…LVLV, VVTI…STST, and LMEG…VMYI.

It belongs to the HAK/KUP transporter (TC 2.A.72) family.

Its subcellular location is the cell inner membrane. The enzyme catalyses K(+)(in) + H(+)(in) = K(+)(out) + H(+)(out). Transport of potassium into the cell. Likely operates as a K(+):H(+) symporter. The chain is Probable potassium transport system protein Kup from Vibrio cholerae serotype O1 (strain ATCC 39315 / El Tor Inaba N16961).